The primary structure comprises 595 residues: MGAVRIAPGLALLLCCPVLSSAYALVDADDVMTKEEQIFLLHRAQAQCQKRLKEVLQRPADIMESDKGWASASTSGKPKKEKASGKLYPESEEDKEVPTGSRHRGRPCLPEWDHILCWPLGAPGEVVAVPCPDYIYDFNHKGHAYRRCDRNGSWELVPGHNRTWANYSECVKFLTNETREREVFDRLGMIYTVGYSVSLASLTVAVLILAYFRRLHCTRNYIHMHLFLSFMLRAVSIFVKDAVLYSGATLDEAERLTEEELRAIAQAPPPPTAAAGYAGCRVAVTFFLYFLATNYYWILVEGLYLHSLIFMAFFSEKKYLWGFTVFGWGLPAVFVAVWVSVRATLANTGCWDLSSGNKKWIIQVPILASIVLNFILFINIVRVLATKLRETNAGRCDTRQQYRKLLKSTLVLMPLFGVHYIVFMATPYTEVSGTLWQVQMHYEMLFNSFQGFFVAIIYCFCNGEVQAEIKKSWSRWTLALDFKRKARSGSSSYSYGPMVSHTSVTNVGPRAGLGLPLSPRLLPAAAATTTATTNGHPPIPGHTKPGAPTLPATPPATAAPKDDGFLNGSCSGLDEEASAPERPPALLQEEWETVM.

The first 28 residues, 1–28, serve as a signal peptide directing secretion; sequence MGAVRIAPGLALLLCCPVLSSAYALVDA. The Extracellular portion of the chain corresponds to 29–188; that stretch reads DDVMTKEEQI…REREVFDRLG (160 aa). 3 disulfide bridges follow: Cys48–Cys117, Cys108–Cys148, and Cys131–Cys170. Residues 66 to 103 are disordered; it reads DKGWASASTSGKPKKEKASGKLYPESEEDKEVPTGSRH. Residues Asn151, Asn161, Asn166, and Asn176 are each glycosylated (N-linked (GlcNAc...) asparagine). Residues 189-209 traverse the membrane as a helical segment; sequence MIYTVGYSVSLASLTVAVLIL. Residues 210–223 are Cytoplasmic-facing; that stretch reads AYFRRLHCTRNYIH. A helical membrane pass occupies residues 224-244; sequence MHLFLSFMLRAVSIFVKDAVL. Residues 245–294 are Extracellular-facing; sequence YSGATLDEAERLTEEELRAIAQAPPPPTAAAGYAGCRVAVTFFLYFLATN. The helical transmembrane segment at 295–315 threads the bilayer; sequence YYWILVEGLYLHSLIFMAFFS. Residues 316 to 318 are Cytoplasmic-facing; it reads EKK. A helical transmembrane segment spans residues 319–339; that stretch reads YLWGFTVFGWGLPAVFVAVWV. At 340 to 360 the chain is on the extracellular side; sequence SVRATLANTGCWDLSSGNKKW. Residues 361–381 form a helical membrane-spanning segment; the sequence is IIQVPILASIVLNFILFINIV. At 382–404 the chain is on the cytoplasmic side; sequence RVLATKLRETNAGRCDTRQQYRK. The helical transmembrane segment at 405-425 threads the bilayer; it reads LLKSTLVLMPLFGVHYIVFMA. Over 426–439 the chain is Extracellular; it reads TPYTEVSGTLWQVQ. The helical transmembrane segment at 440 to 460 threads the bilayer; that stretch reads MHYEMLFNSFQGFFVAIIYCF. Residues 461-595 lie on the Cytoplasmic side of the membrane; the sequence is CNGEVQAEIK…LLQEEWETVM (135 aa). The Important for interaction with G proteins signature appears at 473 to 476; that stretch reads WSRW. The disordered stretch occupies residues 528-595; sequence TTTATTNGHP…LLQEEWETVM (68 aa). Positions 547–559 are enriched in low complexity; that stretch reads APTLPATPPATAA. Position 553 is a phosphothreonine (Thr553).

Belongs to the G-protein coupled receptor 2 family. Homodimer in the absence of bound ligand. Peptide hormone binding leads to dissociation of the homodimer. N-glycosylated. High levels in the kidney, with much lower levels in aorta, heart, lung, prostate, testis, and skeletal muscle.

It localises to the cell membrane. Functionally, G-protein-coupled receptor for parathyroid hormone (PTH) and for parathyroid hormone-related peptide (PTHLH). Ligand binding causes a conformation change that triggers signaling via guanine nucleotide-binding proteins (G proteins) and modulates the activity of downstream effectors, such as adenylate cyclase (cAMP). PTH1R is coupled to G(s) G alpha proteins and mediates activation of adenylate cyclase activity. PTHLH dissociates from PTH1R more rapidly than PTH; as consequence, the cAMP response induced by PTHLH decays faster than the response induced by PTH. The protein is Parathyroid hormone/parathyroid hormone-related peptide receptor (PTH1R) of Canis lupus familiaris (Dog).